A 335-amino-acid chain; its full sequence is 3-hydroxyisobutyrate dehydrogenase, mitochondrial (335 aa).

The N-terminal 35 residues, 1–35 (MAASLGFRGAASGLRYWSGRRRPVGSLAAVCSRSM), are a transit peptide targeting the mitochondrion. 39-68 (TPVGFIGLGNMGNPMAKNLIKHGYPLILYD) serves as a coordination point for NAD(+). 2 positions are modified to N6-acetyllysine; alternate: K59 and K75. An N6-succinyllysine; alternate mark is found at K59 and K75. The residue at position 94 (K94) is an N6-succinyllysine. Residues 102–103 (LP) and N107 each bind NAD(+). K120 carries the post-translational modification N6-acetyllysine. T133 provides a ligand contact to NAD(+). K140 is subject to N6-succinyllysine. Residue K144 is modified to N6-acetyllysine. K148 bears the N6-acetyllysine; alternate mark. The residue at position 148 (K148) is an N6-succinyllysine; alternate. The active site involves K208. Residues K237 and K241 each carry the N6-acetyllysine; alternate modification. N6-succinyllysine; alternate is present on residues K237 and K241. Residue K283 participates in NAD(+) binding. An N6-succinyllysine modification is found at K296. K320 is subject to N6-acetyllysine; alternate. Residue K320 is modified to N6-succinyllysine; alternate.

The protein belongs to the HIBADH-related family. 3-hydroxyisobutyrate dehydrogenase subfamily. As to quaternary structure, homodimer. Higher level in kidney, liver, and heart than in muscle.

It is found in the mitochondrion. It carries out the reaction 3-hydroxy-2-methylpropanoate + NAD(+) = 2-methyl-3-oxopropanoate + NADH + H(+). The protein operates within amino-acid degradation; L-valine degradation. The sequence is that of 3-hydroxyisobutyrate dehydrogenase, mitochondrial (Hibadh) from Rattus norvegicus (Rat).